We begin with the raw amino-acid sequence, 260 residues long: DNA-binding protein RFXANK (260 aa).

The interval 1–79 is disordered; the sequence is MELTQPAEDL…STTLTNRQRG (79 aa). Over residues 22 to 33 the composition is skewed to acidic residues; it reads GDPEDPGEEAAD. Positions 57–77 are enriched in polar residues; sequence SVSSPQAGSSLKHSTTLTNRQ. ANK repeat units follow at residues 89-118, 123-152, 156-185, 189-218, and 222-251; these read LDSL…NLVN, RGFT…DPHI, ERES…DINI, NGGT…DLTT, and SGYT…KLFQ.

In terms of assembly, forms homodimers. The RFX heterotetrameric complex consists of 2 molecules of RFX5 and one each of RFXAP and RFX-B/RFXANK; with each subunit representing a separate complementation group. Interacts (via ankyrin repeats) with RFX5 (via PxLPxI/L motif); the interaction is direct. RFX forms cooperative DNA binding complexes with X2BP and CBF/NF-Y. RFX associates with CIITA to form an active transcriptional complex. Interacts with RAF1. Interacts (via ankyrin repeats) with RFX7 (via PxLPxI/L motif). In terms of processing, phosphorylated by RAF1. In terms of tissue distribution, ubiquitous.

Its subcellular location is the cytoplasm. The protein resides in the nucleus. Functionally, activates transcription from class II MHC promoters. Activation requires the activity of the MHC class II transactivator/CIITA. May regulate other genes in the cell. RFX binds the X1 box of MHC-II promoters. May also potentiate the activation of RAF1. Its function is as follows. Isoform 2 is not involved in the positive regulation of MHC class II genes. This Homo sapiens (Human) protein is DNA-binding protein RFXANK (RFXANK).